We begin with the raw amino-acid sequence, 444 residues long: tRNA modification GTPase MnmE (444 aa).

Residues R23, E82, and K121 each contribute to the (6S)-5-formyl-5,6,7,8-tetrahydrofolate site. The 150-residue stretch at 216 to 365 (GTSIVLAGLP…LKQALQKWLN (150 aa)) folds into the TrmE-type G domain. K(+) is bound at residue N226. Residues 226–231 (NAGKSS), 245–251 (TDIPGTT), and 270–273 (DSAG) each bind GTP. Position 230 (S230) interacts with Mg(2+). Positions 245, 247, and 250 each coordinate K(+). T251 contributes to the Mg(2+) binding site. (6S)-5-formyl-5,6,7,8-tetrahydrofolate is bound at residue K444.

Belongs to the TRAFAC class TrmE-Era-EngA-EngB-Septin-like GTPase superfamily. TrmE GTPase family. In terms of assembly, homodimer. Heterotetramer of two MnmE and two MnmG subunits. The cofactor is K(+).

It localises to the cytoplasm. Functionally, exhibits a very high intrinsic GTPase hydrolysis rate. Involved in the addition of a carboxymethylaminomethyl (cmnm) group at the wobble position (U34) of certain tRNAs, forming tRNA-cmnm(5)s(2)U34. The polypeptide is tRNA modification GTPase MnmE (Chlamydia trachomatis serovar L2 (strain ATCC VR-902B / DSM 19102 / 434/Bu)).